A 193-amino-acid chain; its full sequence is dCTP deaminase (193 aa).

DCTP is bound by residues 110–115 (RSSLAR), Asp-128, 136–138 (VLE), Tyr-171, Lys-178, and Gln-182. The active-site Proton donor/acceptor is the Glu-138.

It belongs to the dCTP deaminase family. Homotrimer.

It catalyses the reaction dCTP + H2O + H(+) = dUTP + NH4(+). The protein operates within pyrimidine metabolism; dUMP biosynthesis; dUMP from dCTP (dUTP route): step 1/2. Catalyzes the deamination of dCTP to dUTP. The polypeptide is dCTP deaminase (Escherichia coli (strain K12 / MC4100 / BW2952)).